The following is a 123-amino-acid chain: MTTPTPTTLKHHATTILTTLVNDRQTAAIEHLLHPTITLKHNDLPAMSKSELIAFWPEVLAQSPHFRVQIRDVIAEGNKVWVYSRVEGRLGEGVMDDFHMMVFDEEGLVVRSTGVQRVVEGEM.

Belongs to the aurE cyclase family.

It participates in mycotoxin biosynthesis. Probable cyclase; part of the gene cluster that mediates the biosynthesis of ochratoxin A (OTA), a mycotoxin composed of a chlorinated type I polyketide dihydroisocoumarin moiety linked to L-phenylalanine, and demonstrated to have nephrotoxic, immunotoxic, genotoxic, neurotoxic, and teratogenic properties. OtaY is probably involved in the polyketide cyclization. The pathway begins with the highly reducing polyketide synthase otaA that catalyzes the formation of the isocoumarin group during the initial stages of biosynthesis, starting from one acetate and 4 malonate units, to originate the characteristic pentaketide skeleton 7-methylmellein (7-MM) of the OTA molecule. The newly identified cyclase otaY might be involved in the polyketide cyclization reaction during the initial steps of the OTA biosynthesis. 7-MM is then oxidized into 7-carboxymellein (also called ochratoxin beta) by the cytochrome P450 monooxygenase otaC. The NRPS encoded by the otaB gene is involved in the linking of phenylalanine to the dihydroisocoumarin ring. The reaction catalyzed by NRPS results in the production of ochratoxin B (OTB), which is the non-chlorinated analog of OTA and which subsequently serves as the substrate of the halogenase otaD for chlorination activity to form the final molecular structure of OTA, containing a chlorine atom in the C-5 position of the molecule. The chain is Probable cyclase otaY from Aspergillus carbonarius (strain ITEM 5010).